The primary structure comprises 194 residues: Large ribosomal subunit protein eL15 (194 aa).

The segment at 160-194 (RGLTSAGKKGRGLMYKGKGAEKVRPSVRANSKKAK) is disordered.

This sequence belongs to the eukaryotic ribosomal protein eL15 family.

The polypeptide is Large ribosomal subunit protein eL15 (Methanococcus maripaludis (strain C6 / ATCC BAA-1332)).